The primary structure comprises 457 residues: ATP synthase subunit beta (457 aa).

147 to 154 provides a ligand contact to ATP; it reads GGAGVGKT.

The protein belongs to the ATPase alpha/beta chains family. As to quaternary structure, F-type ATPases have 2 components, CF(1) - the catalytic core - and CF(0) - the membrane proton channel. CF(1) has five subunits: alpha(3), beta(3), gamma(1), delta(1), epsilon(1). CF(0) has three main subunits: a(1), b(2) and c(9-12). The alpha and beta chains form an alternating ring which encloses part of the gamma chain. CF(1) is attached to CF(0) by a central stalk formed by the gamma and epsilon chains, while a peripheral stalk is formed by the delta and b chains.

It localises to the cell inner membrane. It carries out the reaction ATP + H2O + 4 H(+)(in) = ADP + phosphate + 5 H(+)(out). Produces ATP from ADP in the presence of a proton gradient across the membrane. The catalytic sites are hosted primarily by the beta subunits. In Actinobacillus pleuropneumoniae serotype 3 (strain JL03), this protein is ATP synthase subunit beta.